Consider the following 122-residue polypeptide: Small ribosomal subunit protein uS13 (122 aa).

Residues 95–122 (GLPVRGQRTKTNARTRKGPKKTIAGKKK) form a disordered region.

The protein belongs to the universal ribosomal protein uS13 family. In terms of assembly, part of the 30S ribosomal subunit. Forms a loose heterodimer with protein S19. Forms two bridges to the 50S subunit in the 70S ribosome.

Functionally, located at the top of the head of the 30S subunit, it contacts several helices of the 16S rRNA. In the 70S ribosome it contacts the 23S rRNA (bridge B1a) and protein L5 of the 50S subunit (bridge B1b), connecting the 2 subunits; these bridges are implicated in subunit movement. Contacts the tRNAs in the A and P-sites. The chain is Small ribosomal subunit protein uS13 from Corynebacterium diphtheriae (strain ATCC 700971 / NCTC 13129 / Biotype gravis).